The sequence spans 1033 residues: SIT4-associating protein SAP190 (1033 aa).

4 disordered regions span residues 32–82 (DQDD…TTES), 147–213 (PEII…QVET), 768–813 (FGND…HDSG), and 828–1033 (ENEE…KEAF). The segment covering 158–170 (ILIERDRKDKKED) has biased composition (basic and acidic residues). The span at 171–182 (AEEGGDSEETTN) shows a compositional bias: acidic residues. Positions 183 to 195 (DSDHDSGDERSVD) are enriched in basic and acidic residues. At Ser-774 the chain carries Phosphoserine. Composition is skewed to acidic residues over residues 784–793 (SEDIIGDTEG) and 828–838 (ENEEDYAEYSD). Ser-857, Ser-862, and Ser-892 each carry phosphoserine. Residues 858 to 879 (DDGKSKSAESEFTDKISEHRDG) show a composition bias toward basic and acidic residues. A compositionally biased stretch (polar residues) spans 909 to 924 (SRSQPSDPKLQDQNIF). Residues 932–944 (GVGDDDDYMDPND) are compositionally biased toward acidic residues. Phosphothreonine is present on Thr-990. Ser-991 is subject to Phosphoserine. Residues 1000–1018 (ISSDEEDSEDEDEENDMGN) show a composition bias toward acidic residues.

It belongs to the SAPS family. As to quaternary structure, associates with the SIT4 protein phosphatase catalytic subunit in a cell-cycle-dependent manner. Hyperphosphorylated in the absence of SIT4.

It localises to the cytoplasm. Its function is as follows. Positive regulator of protein phosphatase SIT4. Involved in the general amino acid control (GAAC) response regulated by TOR. Involved in the dephosphorylation of the elongator complex subunit IKI3. In Saccharomyces cerevisiae (strain Lalvin EC1118 / Prise de mousse) (Baker's yeast), this protein is SIT4-associating protein SAP190 (SAP190).